The chain runs to 654 residues: APC membrane recruitment protein 2 (654 aa).

Disordered stretches follow at residues 1–105, 224–289, 316–369, and 381–654; these read MEVQ…TAPL, ECGN…QSEQ, IIAD…PQVS, and PAHQ…QSRK. Positions 9 to 18 are enriched in pro residues; sequence EPPPCDPQPP. Over residues 60–70 the composition is skewed to basic and acidic residues; sequence ELVRSKTHDGL. The span at 427–454 shows a compositional bias: basic and acidic residues; it reads PQKDEDSPAPRRAEPVLHHAPARLEKRP. Over residues 468–479 the composition is skewed to polar residues; that stretch reads SGSSKTGKQQPS. Residues 565-575 show a composition bias toward low complexity; sequence SPKCSSSATSS. Over residues 576-586 the composition is skewed to polar residues; it reads FRSMKGSTSLP. Positions 601–621 are enriched in low complexity; the sequence is SHSSSQGALSSNLSPTSTTPP. The span at 644–654 shows a compositional bias: polar residues; that stretch reads GKSTSTSQSRK.

The protein belongs to the Amer family.

Its subcellular location is the cell membrane. Negative regulator of the canonical Wnt signaling pathway involved in neuroectodermal patterning. Acts by specifically binding phosphatidylinositol 4,5-bisphosphate (PtdIns(4,5)P2), translocating to the cell membrane and interacting with key regulators of the canonical Wnt signaling pathway, such as components of the beta-catenin destruction complex. This chain is APC membrane recruitment protein 2 (amer2), found in Danio rerio (Zebrafish).